A 119-amino-acid polypeptide reads, in one-letter code: NADH-quinone oxidoreductase subunit A (119 aa).

Transmembrane regions (helical) follow at residues 9 to 29, 63 to 83, and 88 to 108; these read VLLF…LGYV, LVAI…PWAV, and VGMA…VGFA.

Belongs to the complex I subunit 3 family. In terms of assembly, NDH-1 is composed of 14 different subunits. Subunits NuoA, H, J, K, L, M, N constitute the membrane sector of the complex.

The protein resides in the cell inner membrane. The catalysed reaction is a quinone + NADH + 5 H(+)(in) = a quinol + NAD(+) + 4 H(+)(out). Its function is as follows. NDH-1 shuttles electrons from NADH, via FMN and iron-sulfur (Fe-S) centers, to quinones in the respiratory chain. The immediate electron acceptor for the enzyme in this species is believed to be ubiquinone. Couples the redox reaction to proton translocation (for every two electrons transferred, four hydrogen ions are translocated across the cytoplasmic membrane), and thus conserves the redox energy in a proton gradient. The chain is NADH-quinone oxidoreductase subunit A from Verminephrobacter eiseniae (strain EF01-2).